Reading from the N-terminus, the 453-residue chain is Probable exopolygalacturonase B (453 aa).

An N-terminal signal peptide occupies residues 1-16 (MKFLALAALFASTVSS). 2 N-linked (GlcNAc...) asparagine glycosylation sites follow: asparagine 185 and asparagine 225. The active-site Proton donor is aspartate 255. Cysteine 257 and cysteine 274 are joined by a disulfide. Asparagine 263 and asparagine 275 each carry an N-linked (GlcNAc...) asparagine glycan. Residue histidine 278 is part of the active site. 2 PbH1 repeats span residues 295-316 (IENVWIENVTLLNGENGARLKA) and 327-348 (INNVTYKNIHVENTDNPIVLDQ). N-linked (GlcNAc...) asparagine glycans are attached at residues asparagine 302, asparagine 329, asparagine 354, and asparagine 366. The stretch at 362-405 (PSRVNFTNIVFENIYGTSSGKHGKVVADLTCSPNAVCSGIRLKN) is one PbH1 3 repeat. Cysteines 392 and 398 form a disulfide. Residue asparagine 436 is glycosylated (N-linked (GlcNAc...) asparagine).

Belongs to the glycosyl hydrolase 28 family.

It is found in the secreted. It carries out the reaction [(1-&gt;4)-alpha-D-galacturonosyl](n) + H2O = alpha-D-galacturonate + [(1-&gt;4)-alpha-D-galacturonosyl](n-1). In terms of biological role, specific in hydrolyzing the terminal glycosidic bond of polygalacturonic acid and oligogalacturonates. The sequence is that of Probable exopolygalacturonase B (pgxB) from Neosartorya fischeri (strain ATCC 1020 / DSM 3700 / CBS 544.65 / FGSC A1164 / JCM 1740 / NRRL 181 / WB 181) (Aspergillus fischerianus).